Here is an 831-residue protein sequence, read N- to C-terminus: uncharacterized protein (831 aa).

His-787 acts as the Tele-phosphohistidine intermediate in catalysis.

The protein belongs to the PEP-utilizing enzyme family.

This is an uncharacterized protein from Bacillus subtilis (strain 168).